The sequence spans 408 residues: DNA primase DnaG (408 aa).

Residues 172 to 248 (DSIIIVEGRA…HVDYIARAPP (77 aa)) enclose the Toprim domain. 3 residues coordinate Mg(2+): Glu178, Asp222, and Asp224. The segment at 279 to 304 (AAGEKAETPQQPPPQQPVPQQEVREE) is disordered.

It belongs to the archaeal DnaG primase family. Forms a ternary complex with MCM helicase and DNA. Component of the archaeal exosome complex. It depends on Mg(2+) as a cofactor.

The catalysed reaction is ssDNA + n NTP = ssDNA/pppN(pN)n-1 hybrid + (n-1) diphosphate.. In terms of biological role, RNA polymerase that catalyzes the synthesis of short RNA molecules used as primers for DNA polymerase during DNA replication. Also part of the exosome, which is a complex involved in RNA degradation. Acts as a poly(A)-binding protein that enhances the interaction between heteromeric, adenine-rich transcripts and the exosome. This is DNA primase DnaG from Pyrobaculum aerophilum (strain ATCC 51768 / DSM 7523 / JCM 9630 / CIP 104966 / NBRC 100827 / IM2).